Consider the following 399-residue polypeptide: Enoyl-[acyl-carrier-protein] reductase [NADH] (399 aa).

NAD(+)-binding positions include 48-53 (GASTGY), 74-75 (FE), 111-112 (DA), and 139-140 (LA). Residue Y225 coordinates substrate. Residue Y235 is the Proton donor of the active site. NAD(+) is bound by residues K244 and 274 to 276 (VVT).

This sequence belongs to the TER reductase family. As to quaternary structure, monomer.

It catalyses the reaction a 2,3-saturated acyl-[ACP] + NAD(+) = a (2E)-enoyl-[ACP] + NADH + H(+). It functions in the pathway lipid metabolism; fatty acid biosynthesis. Its function is as follows. Involved in the final reduction of the elongation cycle of fatty acid synthesis (FAS II). Catalyzes the reduction of a carbon-carbon double bond in an enoyl moiety that is covalently linked to an acyl carrier protein (ACP). The polypeptide is Enoyl-[acyl-carrier-protein] reductase [NADH] (Erwinia tasmaniensis (strain DSM 17950 / CFBP 7177 / CIP 109463 / NCPPB 4357 / Et1/99)).